The following is a 404-amino-acid chain: Nesprin-4 (404 aa).

Disordered regions lie at residues 1–91 and 277–347; these read MALS…GGKH and GQRG…GAPD. Over 1–355 the chain is Cytoplasmic; it reads MALSLPLGPR…PDPASRQPLT (355 aa). Over residues 39–52 the composition is skewed to polar residues; the sequence is EESTSPEQAQTLGQ. Residues 307–320 are compositionally biased toward basic residues; it reads HQKRLARHQRHSLL. A KASH domain is found at 347–404; the sequence is DPASRQPLTFLLILFLLFLLLVGAMFLLPASGGPCCSHARIPRTPYLVLSYVNGLPPV. A helical; Anchor for type IV membrane protein transmembrane segment spans residues 356 to 376; it reads FLLILFLLFLLLVGAMFLLPA. Over 377–404 the chain is Perinuclear space; it reads SGGPCCSHARIPRTPYLVLSYVNGLPPV.

It belongs to the nesprin family. Core component of LINC complexes which are composed of inner nuclear membrane SUN domain-containing proteins coupled to outer nuclear membrane KASH domain-containing nesprins. SUN and KASH domain-containing proteins seem to bind each other promiscuously; however, differentially expression of LINC complex constituents can give rise to specific assemblies. Probably part of a SUN1-containing LINC complex. Interacts with kinesins KIF5B and KLC1. The disulfid bond with SUN1 or SUN2 is required for stability of the respective LINC complex under tensile forces.

The protein resides in the nucleus outer membrane. Functionally, as a component of the LINC (LInker of Nucleoskeleton and Cytoskeleton) complex, involved in the connection between the nuclear lamina and the cytoskeleton. The nucleocytoplasmic interactions established by the LINC complex play an important role in the transmission of mechanical forces across the nuclear envelope and in nuclear movement and positioning. Behaves as a kinesin cargo, providing a functional binding site for kinesin-1 at the nuclear envelope. Hence may contribute to the establishment of secretory epithelial morphology by promoting kinesin-dependent apical migration of the centrosome and Golgi apparatus and basal localization of the nucleus. The chain is Nesprin-4 (SYNE4) from Homo sapiens (Human).